The chain runs to 139 residues: Putative nickel-responsive regulator (139 aa).

Ni(2+) contacts are provided by histidine 77, histidine 88, histidine 90, and cysteine 96.

The protein belongs to the transcriptional regulatory CopG/NikR family. Ni(2+) serves as cofactor.

Functionally, transcriptional regulator. In Haloarcula marismortui (strain ATCC 43049 / DSM 3752 / JCM 8966 / VKM B-1809) (Halobacterium marismortui), this protein is Putative nickel-responsive regulator.